Reading from the N-terminus, the 185-residue chain is Elongation factor P (185 aa).

It belongs to the elongation factor P family.

The protein resides in the cytoplasm. It participates in protein biosynthesis; polypeptide chain elongation. In terms of biological role, involved in peptide bond synthesis. Stimulates efficient translation and peptide-bond synthesis on native or reconstituted 70S ribosomes in vitro. Probably functions indirectly by altering the affinity of the ribosome for aminoacyl-tRNA, thus increasing their reactivity as acceptors for peptidyl transferase. This Staphylococcus saprophyticus subsp. saprophyticus (strain ATCC 15305 / DSM 20229 / NCIMB 8711 / NCTC 7292 / S-41) protein is Elongation factor P.